A 297-amino-acid chain; its full sequence is B-lymphocyte antigen CD20 (297 aa).

Residues 1–51 (MTTPRNSMSGTLPVDPMKSPTAMYPVQKIIPKRMPSVVGPTQNFFMRESKT) lie on the Cytoplasmic side of the membrane. Ser36 carries the phosphoserine modification. A helical transmembrane segment spans residues 52–72 (LGAVQIMNGLFHIALGSLLMI). The Extracellular portion of the chain corresponds to 73-75 (HTD). The chain crosses the membrane as a helical span at residues 76-96 (VCAPICITMWYPLWGGIMFII). Residues 97–122 (SGSLLAAADKNPRKSLVKGKMIMNSL) lie on the Cytoplasmic side of the membrane. Residues 123 to 143 (SLFAAISGIIFLIMDIFNITI) form a helical membrane-spanning segment. At 144–188 (SHFFKMENLNLIKAPMPYVDIHNCDPANPSEKNSLSIQYCGSIRS) the chain is on the extracellular side. A helical transmembrane segment spans residues 189–209 (VFLGVFAVMLIFAFFQKLVTA). The Cytoplasmic segment spans residues 210–297 (GIVENEWKKL…SSPIENDSIP (88 aa)). A lipid anchor (S-palmitoyl cysteine) is attached at Cys220. Residue Ser225 is modified to Phosphoserine. Residues 274–297 (ELEINFAEPPQEQESSPIENDSIP) are disordered. Residues 281 to 290 (EPPQEQESSP) are compositionally biased toward low complexity.

It belongs to the MS4A family. As to quaternary structure, forms homotetramers. Interacts with the heavy and light chains of cell surface IgM, the antigen-binding components of the BCR. In terms of processing, phosphorylated. Might be functionally regulated by protein kinase(s). As to expression, expressed in PBMCs and lymph node from healthy dogs, in B-cells of canine lymphoma, but not in T-cell lymphoma cells and non-T and non-B-cell lymphoma cells.

The protein localises to the cell membrane. Its function is as follows. B-lymphocyte-specific membrane protein that plays a role in the regulation of cellular calcium influx necessary for the development, differentiation, and activation of B-lymphocytes. Functions as a store-operated calcium (SOC) channel component promoting calcium influx after activation by the B-cell receptor/BCR. This Canis lupus familiaris (Dog) protein is B-lymphocyte antigen CD20 (MS4A1).